A 230-amino-acid chain; its full sequence is MAESTTPEVVAYPAGDEPLPVLSEVEVRVLGALVEKQLTTPEYYPLTLNALVNACNQTSSRDPIVSYDEATVTRGLDGLRDKKLAYVFAGAESRVVKFGHKFAERFELGRAEVAVLCVLLLRGPQTPGELRSRTGRMHAFESLPDLEQTIAALAAKQPHPLVTRLPRQTGFKEVRVTHLLGGSVSVSSAEPAPEPPPVDRTMQLDQDVAALRQELAELREQFAAFRKQFE.

It belongs to the UPF0502 family.

This chain is UPF0502 protein Oter_3715, found in Opitutus terrae (strain DSM 11246 / JCM 15787 / PB90-1).